The sequence spans 289 residues: Type II methyltransferase M.MjaIII (289 aa).

S-adenosyl-L-methionine-binding residues include tryptophan 9, lysine 13, aspartate 63, and aspartate 199.

Belongs to the N(4)/N(6)-methyltransferase family.

The catalysed reaction is a 2'-deoxyadenosine in DNA + S-adenosyl-L-methionine = an N(6)-methyl-2'-deoxyadenosine in DNA + S-adenosyl-L-homocysteine + H(+). In terms of biological role, an alpha subtype methylase that recognizes the double-stranded sequence 5'-GATC-3', methylates A-2 on both strands, and protects the DNA from cleavage by the MjaIII endonuclease. The polypeptide is Type II methyltransferase M.MjaIII (mjaIIIM) (Methanocaldococcus jannaschii (strain ATCC 43067 / DSM 2661 / JAL-1 / JCM 10045 / NBRC 100440) (Methanococcus jannaschii)).